The sequence spans 141 residues: Large ribosomal subunit protein uL11 (141 aa).

This sequence belongs to the universal ribosomal protein uL11 family. In terms of assembly, part of the ribosomal stalk of the 50S ribosomal subunit. Interacts with L10 and the large rRNA to form the base of the stalk. L10 forms an elongated spine to which L12 dimers bind in a sequential fashion forming a multimeric L10(L12)X complex. One or more lysine residues are methylated.

In terms of biological role, forms part of the ribosomal stalk which helps the ribosome interact with GTP-bound translation factors. In Exiguobacterium sibiricum (strain DSM 17290 / CCUG 55495 / CIP 109462 / JCM 13490 / 255-15), this protein is Large ribosomal subunit protein uL11.